The sequence spans 224 residues: Peroxiredoxin-6 (224 aa).

The Thioredoxin domain maps to 5–169; sequence LLLGDEAPNF…ILRVIISLQL (165 aa). The interval 31–40 is required and sufficient for targeting to lysosomes and lamellar bodies; sequence DSWGILFSHP. Position 44 is a phosphothreonine (Thr-44). The Cysteine sulfenic acid (-SOH) intermediate; for peroxidase activity role is filled by Cys-47. N6-acetyllysine is present on Lys-63. Residue Tyr-89 is modified to Phosphotyrosine. The For phospholipase activity role is filled by Asp-140. Thr-177 carries the phosphothreonine; by MAPK modification. At Lys-209 the chain carries N6-acetyllysine; alternate. At Lys-209 the chain carries N6-succinyllysine; alternate.

This sequence belongs to the peroxiredoxin family. Prx6 subfamily. In terms of assembly, homodimer. Interacts with GSTP1; mediates PRDX6 glutathionylation and regeneration. Interacts with APEX1. Interacts with STH. May interact with FAM168B. May interact with HTR2A. Does not need Ca(2+) as cofactor. is required as a cofactor. Post-translationally, irreversibly inactivated by overoxidation of Cys-47 to sulfinic acid (Cys-SO(2)H) and sulfonic acid (Cys-SO(3)H) forms upon oxidative stress. Phosphorylation at Thr-177 by MAP kinases increases the phospholipase activity of the enzyme. The phosphorylated form exhibits a greater lysophosphatidylcholine acyltransferase activity compared to the non-phosphorylated form.

It localises to the cytoplasm. Its subcellular location is the lysosome. The enzyme catalyses a hydroperoxide + 2 glutathione = an alcohol + glutathione disulfide + H2O. It catalyses the reaction a 1,2-diacyl-sn-glycero-3-phosphocholine + H2O = a 1-acyl-sn-glycero-3-phosphocholine + a fatty acid + H(+). The catalysed reaction is a 1-acyl-sn-glycero-3-phosphocholine + an acyl-CoA = a 1,2-diacyl-sn-glycero-3-phosphocholine + CoA. It carries out the reaction 1-hexadecanoyl-sn-glycero-3-phosphocholine + hexadecanoyl-CoA = 1,2-dihexadecanoyl-sn-glycero-3-phosphocholine + CoA. The enzyme catalyses 1,2-dihexadecanoyl-sn-glycero-3-phosphocholine + H2O = 1-hexadecanoyl-sn-glycero-3-phosphocholine + hexadecanoate + H(+). Thiol-specific peroxidase that catalyzes the reduction of hydrogen peroxide and organic hydroperoxides to water and alcohols, respectively. Can reduce H(2)O(2) and short chain organic, fatty acid, and phospholipid hydroperoxides. Also has phospholipase activity, and can therefore either reduce the oxidized sn-2 fatty acyl group of phospholipids (peroxidase activity) or hydrolyze the sn-2 ester bond of phospholipids (phospholipase activity). These activities are dependent on binding to phospholipids at acidic pH and to oxidized phospholipds at cytosolic pH. Plays a role in cell protection against oxidative stress by detoxifying peroxides and in phospholipid homeostasis. Exhibits acyl-CoA-dependent lysophospholipid acyltransferase which mediates the conversion of lysophosphatidylcholine (1-acyl-sn-glycero-3-phosphocholine or LPC) into phosphatidylcholine (1,2-diacyl-sn-glycero-3-phosphocholine or PC). Shows a clear preference for LPC as the lysophospholipid and for palmitoyl CoA as the fatty acyl substrate. The chain is Peroxiredoxin-6 (PRDX6) from Bos taurus (Bovine).